Reading from the N-terminus, the 534-residue chain is MAQIKADEITALLKEQIANYDAKVRVDEVGTVISLGDGIARLHGLDKCMAGEMLEFPHGVYGMAMNLEEDQVGAVLLGDYTEIREGDQVKRTGQILSVPVGDAMIGRVVNSLGEPIDDKGPIAASDRFPVERLAPGVIDRQPVREPMMTGLKAIDSMIPIGRGQRELIIGDRQTGKTAVALDTIINSKGRDLICVYCAIGQKRSSVAGVVQTLAKHGALDYTVVVVASASEPAPMLYLAPYAATAMAEYFRDNGKHALIIYDDLSKHAVAYRELSLLLRRPPGREAYPGDVFYLHSRLLERSSKLSKEKGGGSLTALPIIETQAGDVSAYIPTNVISITDGQIFLETDLFNSGVRPAVNVGLSVSRVGFSAAIKAIKQVGSTLKLDLAQYRDLAAFAQFGSDLDKATQNQLNRGQRLTELLKQPQFQPLSAEQQVMILFAGTQGFLDDIKVPYIRAFEDGLYKYLDASQRQLLNDIATKKALDDELRGRVKDALNEYKQNFLDEHEDARVKSETAQAAGKDKDEKAAATAGAGK.

170–177 (GDRQTGKT) contributes to the ATP binding site. Positions 505-534 (HEDARVKSETAQAAGKDKDEKAAATAGAGK) are disordered.

It belongs to the ATPase alpha/beta chains family. As to quaternary structure, F-type ATPases have 2 components, CF(1) - the catalytic core - and CF(0) - the membrane proton channel. CF(1) has five subunits: alpha(3), beta(3), gamma(1), delta(1), epsilon(1). CF(0) has three main subunits: a(1), b(2) and c(9-12). The alpha and beta chains form an alternating ring which encloses part of the gamma chain. CF(1) is attached to CF(0) by a central stalk formed by the gamma and epsilon chains, while a peripheral stalk is formed by the delta and b chains.

The protein localises to the cell inner membrane. The catalysed reaction is ATP + H2O + 4 H(+)(in) = ADP + phosphate + 5 H(+)(out). Produces ATP from ADP in the presence of a proton gradient across the membrane. The alpha chain is a regulatory subunit. The chain is ATP synthase subunit alpha from Acidobacterium capsulatum (strain ATCC 51196 / DSM 11244 / BCRC 80197 / JCM 7670 / NBRC 15755 / NCIMB 13165 / 161).